The sequence spans 155 residues: Small ribosomal subunit protein uS7c (155 aa).

The protein belongs to the universal ribosomal protein uS7 family. In terms of assembly, part of the 30S ribosomal subunit.

The protein resides in the plastid. One of the primary rRNA binding proteins, it binds directly to 16S rRNA where it nucleates assembly of the head domain of the 30S subunit. The sequence is that of Small ribosomal subunit protein uS7c (rps7) from Aneura mirabilis (Parasitic liverwort).